A 255-amino-acid polypeptide reads, in one-letter code: MRPVYFLSDFGLEDPYVAVVKAVLAERAPGPAVVDLAHALPPQDLRRAAYALFEALPYLPEGAVVLAVVDPGVGTARRAVAALGRWTYVGPDNGLFTLAWLLDPPRRAFLLEPPRPRPKAALPGWAPGEATFHGRDVFAPAAAHLALGLPPEGLGPEVPVETLARLPLALTEGPEGEVLTFDRFGNAITTLLRAPVGGFVEVGGRRVPVRRTFGEVPEGAPVAYLGSAGLLEVAVNRGSAREALGLKEGMPVRLL.

Residues aspartate 9, aspartate 70, and asparagine 186 each contribute to the adenosine site. (R)-S-adenosyl-L-methionine is bound by residues asparagine 186, serine 227, glutamate 232, and valine 235. Valine 235 is a binding site for adenosine.

The protein belongs to the SAM hydrolase / SAM-dependent halogenase family. Homotrimer.

The catalysed reaction is (R)-S-adenosyl-L-methionine + H2O = adenosine + L-methionine + H(+). Catalyzes the hydrolysis of S-adenosyl-L-methionine (SAM) into adenosine and L-methionine. Does not have chlorinase or fluorinase activity. The protein is (R)-S-adenosyl-L-methionine hydrolase of Thermus thermophilus (strain ATCC 27634 / DSM 579 / HB8).